The chain runs to 309 residues: tRNA dimethylallyltransferase 1 (309 aa).

14–21 is a binding site for ATP; the sequence is GPTASGKS. 16–21 provides a ligand contact to substrate; it reads TASGKS. The segment at 39 to 42 is interaction with substrate tRNA; sequence DSMQ.

The protein belongs to the IPP transferase family. As to quaternary structure, monomer. Mg(2+) is required as a cofactor.

It catalyses the reaction adenosine(37) in tRNA + dimethylallyl diphosphate = N(6)-dimethylallyladenosine(37) in tRNA + diphosphate. Catalyzes the transfer of a dimethylallyl group onto the adenine at position 37 in tRNAs that read codons beginning with uridine, leading to the formation of N6-(dimethylallyl)adenosine (i(6)A). The polypeptide is tRNA dimethylallyltransferase 1 (Pelobacter propionicus (strain DSM 2379 / NBRC 103807 / OttBd1)).